We begin with the raw amino-acid sequence, 221 residues long: Lipoprotein-releasing system ATP-binding protein LolD (221 aa).

Residues 8-220 enclose the ABC transporter domain; sequence LKMISKHYKQ…YNLKHGLLNI (213 aa). 42 to 49 contributes to the ATP binding site; that stretch reads GSSGSGKS.

The protein belongs to the ABC transporter superfamily. Lipoprotein translocase (TC 3.A.1.125) family. The complex is composed of two ATP-binding proteins (LolD) and two transmembrane proteins (LolC and LolE).

The protein localises to the cell inner membrane. Functionally, part of the ABC transporter complex LolCDE involved in the translocation of mature outer membrane-directed lipoproteins, from the inner membrane to the periplasmic chaperone, LolA. Responsible for the formation of the LolA-lipoprotein complex in an ATP-dependent manner. The polypeptide is Lipoprotein-releasing system ATP-binding protein LolD (Rickettsia prowazekii (strain Madrid E)).